Reading from the N-terminus, the 98-residue chain is Integration host factor subunit beta (98 aa).

It belongs to the bacterial histone-like protein family. Heterodimer of an alpha and a beta chain.

Its function is as follows. This protein is one of the two subunits of integration host factor, a specific DNA-binding protein that functions in genetic recombination as well as in transcriptional and translational control. This Pseudomonas putida (strain GB-1) protein is Integration host factor subunit beta.